Here is a 186-residue protein sequence, read N- to C-terminus: NADH dehydrogenase [ubiquinone] 1 beta subcomplex subunit 8, mitochondrial (186 aa).

Residues 1 to 28 (MAVARAGVLGVQWLQRASWNVMPLGART) constitute a mitochondrion transit peptide. The helical transmembrane segment at 133-153 (LFGFLAFMIFMCWVGEVYPVY) threads the bilayer.

This sequence belongs to the complex I NDUFB8 subunit family. In terms of assembly, complex I is composed of 45 different subunits.

It is found in the mitochondrion inner membrane. In terms of biological role, accessory subunit of the mitochondrial membrane respiratory chain NADH dehydrogenase (Complex I), that is believed not to be involved in catalysis. Complex I functions in the transfer of electrons from NADH to the respiratory chain. The immediate electron acceptor for the enzyme is believed to be ubiquinone. The sequence is that of NADH dehydrogenase [ubiquinone] 1 beta subcomplex subunit 8, mitochondrial (NDUFB8) from Pongo abelii (Sumatran orangutan).